A 1264-amino-acid chain; its full sequence is Valine--tRNA ligase (1264 aa).

The residue at position 2 (Ser-2) is an N-acetylserine. Residues 89 to 219 form the GST C-terminal domain; it reads GSRAAVLVQQ…YSGARSVTQQ (131 aa). The span at 218–230 shows a compositional bias: polar residues; it reads QQPGSEITAPQKT. Residues 218-296 form a disordered region; the sequence is QQPGSEITAP…GEKKDVSGTM (79 aa). Basic and acidic residues-rich tracts occupy residues 234–248 and 260–275; these read LKKE…EKFQ and HGEK…KRDP. A 'HIGH' region motif is present at residues 344–354; that stretch reads PNVTGSLHLGH. Phosphoserine is present on residues Ser-437 and Ser-527. Lys-645 carries the N6-acetyllysine modification. The short motif at 862 to 866 is the 'KMSKS' region element; that stretch reads KMSKS. ATP is bound at residue Lys-865.

This sequence belongs to the class-I aminoacyl-tRNA synthetase family. Forms high-molecular-mass aggregates with elongation factor 1.

The enzyme catalyses tRNA(Val) + L-valine + ATP = L-valyl-tRNA(Val) + AMP + diphosphate. Its activity is regulated as follows. Can be regulated by protein kinase C-dependent phosphorylation. The polypeptide is Valine--tRNA ligase (Vars1) (Rattus norvegicus (Rat)).